A 103-amino-acid polypeptide reads, in one-letter code: Small ribosomal subunit protein uS10 (103 aa).

Belongs to the universal ribosomal protein uS10 family. As to quaternary structure, part of the 30S ribosomal subunit.

Its function is as follows. Involved in the binding of tRNA to the ribosomes. The polypeptide is Small ribosomal subunit protein uS10 (Acetivibrio thermocellus (strain ATCC 27405 / DSM 1237 / JCM 9322 / NBRC 103400 / NCIMB 10682 / NRRL B-4536 / VPI 7372) (Clostridium thermocellum)).